The chain runs to 334 residues: Adenosine deaminase (334 aa).

Zn(2+) contacts are provided by His12 and His14. Positions 14, 16, and 170 each coordinate substrate. Zn(2+) is bound at residue His197. The Proton donor role is filled by Glu200. A Zn(2+)-binding site is contributed by Asp278. Asp279 lines the substrate pocket.

It belongs to the metallo-dependent hydrolases superfamily. Adenosine and AMP deaminases family. Adenosine deaminase subfamily. Requires Zn(2+) as cofactor.

It catalyses the reaction adenosine + H2O + H(+) = inosine + NH4(+). It carries out the reaction 2'-deoxyadenosine + H2O + H(+) = 2'-deoxyinosine + NH4(+). Functionally, catalyzes the hydrolytic deamination of adenosine and 2-deoxyadenosine. In Yersinia pseudotuberculosis serotype IB (strain PB1/+), this protein is Adenosine deaminase.